A 73-amino-acid polypeptide reads, in one-letter code: UPF0150 protein ssl0259 (73 aa).

Belongs to the UPF0150 family.

The polypeptide is UPF0150 protein ssl0259 (Synechocystis sp. (strain ATCC 27184 / PCC 6803 / Kazusa)).